Consider the following 265-residue polypeptide: Thiamine thiazole synthase (265 aa).

NAD(+) contacts are provided by residues A43, 62-63 (ER), G70, V134, and 162-164 (HVD). D164 and H179 together coordinate Fe cation. M229 lines the NAD(+) pocket. A glycine-binding site is contributed by R239.

The protein belongs to the THI4 family. As to quaternary structure, homooctamer; tetramer of dimers. It depends on Fe(2+) as a cofactor.

The enzyme catalyses hydrogen sulfide + glycine + NAD(+) = ADP-5-ethyl-4-methylthiazole-2-carboxylate + nicotinamide + 3 H2O + H(+). The protein operates within cofactor biosynthesis; thiamine diphosphate biosynthesis. Functionally, involved in the biosynthesis of the thiazole moiety of thiamine. Catalyzes the conversion of NAD and glycine to adenosine diphosphate 5-(2-hydroxyethyl)-4-methylthiazole-2-carboxylate (ADT), an adenylated thiazole intermediate, using free sulfide as a source of sulfur. The polypeptide is Thiamine thiazole synthase (Sulfolobus acidocaldarius (strain ATCC 33909 / DSM 639 / JCM 8929 / NBRC 15157 / NCIMB 11770)).